The primary structure comprises 218 residues: Thiamine-phosphate synthase (218 aa).

4-amino-2-methyl-5-(diphosphooxymethyl)pyrimidine contacts are provided by residues 43–47 and Asn75; that span reads QLRDK. Residues Asp76 and Asp95 each coordinate Mg(2+). Position 114 (Ser114) interacts with 4-amino-2-methyl-5-(diphosphooxymethyl)pyrimidine. 141–143 is a 2-[(2R,5Z)-2-carboxy-4-methylthiazol-5(2H)-ylidene]ethyl phosphate binding site; that stretch reads TPT. Lys144 lines the 4-amino-2-methyl-5-(diphosphooxymethyl)pyrimidine pocket. Gly172 serves as a coordination point for 2-[(2R,5Z)-2-carboxy-4-methylthiazol-5(2H)-ylidene]ethyl phosphate.

This sequence belongs to the thiamine-phosphate synthase family. Mg(2+) serves as cofactor.

It catalyses the reaction 2-[(2R,5Z)-2-carboxy-4-methylthiazol-5(2H)-ylidene]ethyl phosphate + 4-amino-2-methyl-5-(diphosphooxymethyl)pyrimidine + 2 H(+) = thiamine phosphate + CO2 + diphosphate. The catalysed reaction is 2-(2-carboxy-4-methylthiazol-5-yl)ethyl phosphate + 4-amino-2-methyl-5-(diphosphooxymethyl)pyrimidine + 2 H(+) = thiamine phosphate + CO2 + diphosphate. The enzyme catalyses 4-methyl-5-(2-phosphooxyethyl)-thiazole + 4-amino-2-methyl-5-(diphosphooxymethyl)pyrimidine + H(+) = thiamine phosphate + diphosphate. It participates in cofactor biosynthesis; thiamine diphosphate biosynthesis; thiamine phosphate from 4-amino-2-methyl-5-diphosphomethylpyrimidine and 4-methyl-5-(2-phosphoethyl)-thiazole: step 1/1. In terms of biological role, condenses 4-methyl-5-(beta-hydroxyethyl)thiazole monophosphate (THZ-P) and 2-methyl-4-amino-5-hydroxymethyl pyrimidine pyrophosphate (HMP-PP) to form thiamine monophosphate (TMP). In Thermobifida fusca (strain YX), this protein is Thiamine-phosphate synthase.